We begin with the raw amino-acid sequence, 212 residues long: Ribosomal RNA small subunit methyltransferase G (212 aa).

S-adenosyl-L-methionine-binding positions include phenylalanine 78, 96 to 98 (ESS), 124 to 125 (VE), and arginine 141.

The protein belongs to the methyltransferase superfamily. RNA methyltransferase RsmG family.

The protein localises to the cytoplasm. In terms of biological role, specifically methylates the N7 position of a guanine in 16S rRNA. This chain is Ribosomal RNA small subunit methyltransferase G, found in Onion yellows phytoplasma (strain OY-M).